The following is a 646-amino-acid chain: Aquaglycerol porin AQY3 (646 aa).

Residues 1–14 (MSYESGRSSSSSES) show a composition bias toward low complexity. Disordered regions lie at residues 1 to 68 (MSYE…SRNK) and 175 to 262 (KNMD…KKRT). Over 1–350 (MSYESGRSSS…AKIRYHMREP (350 aa)) the chain is Cytoplasmic. Positions 19–41 (TLKEEPNGKIAWEESVKKSRENN) are enriched in basic and acidic residues. The segment covering 190 to 201 (TDISRGGSTTSV) has biased composition (polar residues). A helical membrane pass occupies residues 351 to 371 (FAEFLGTLVLVIFGVGGNLQA). Residues 372-383 (TVTKGSGGSYES) are Extracellular-facing. Residues 384–404 (LSFAWGFGCMLGVYVAGGISG) form a helical membrane-spanning segment. Over 405 to 427 (GHINPAVTISMAIFRKFPWKKVP) the chain is Cytoplasmic. Residues 408-410 (NPA) carry the NPA 1 motif. The chain crosses the membrane as a helical span at residues 428–448 (VYIVAQIIGAYFGGAMAYGYF). Residues 449–481 (WSSITEFEGGPHIRTTATGACLFTDPKSYVTWR) lie on the Extracellular side of the membrane. A helical transmembrane segment spans residues 482–502 (NAFFDEFIGASILVGCLMALL). Residues 503 to 509 (DDSNAPP) lie on the Cytoplasmic side of the membrane. Residues 510–530 (GNGMTALIIGFLVAAIGMALG) traverse the membrane as a helical segment. Over 531 to 569 (YQTSFTINPARDLGPRIFASMIGYGPHAFHLTHWWWTWG) the chain is Extracellular. The NPA 2 signature appears at 538–540 (NPA). Residues 570 to 590 (AWGGPIAGGIAGALIYDIFIF) form a helical membrane-spanning segment. Residues 591 to 646 (TGCESPVNYPDNGYIENRVGKLLHAEFHQNDGTVSDESGVNSNSNTGSKKSVPTSS) lie on the Cytoplasmic side of the membrane. Residues 621–646 (DGTVSDESGVNSNSNTGSKKSVPTSS) are disordered.

Belongs to the MIP/aquaporin (TC 1.A.8) family.

The protein resides in the cell membrane. The enzyme catalyses glycerol(in) = glycerol(out). Channel protein that mediates glycerol entry under ethanol stimulation. Does not seem to mediate glycerol uptake under standard conditions. The protein is Aquaglycerol porin AQY3 of Saccharomyces cerevisiae (strain ATCC 204508 / S288c) (Baker's yeast).